The following is a 955-amino-acid chain: Probable autotransporter YcgV (955 aa).

Residues 616–659 (ASGTVPEPTPNPEPTPAPAQPPIVNPDPTPEPAPTPKPTTTADA) form a disordered region. Positions 622 to 652 (EPTPNPEPTPAPAQPPIVNPDPTPEPAPTPK) are enriched in pro residues. Residues 687–955 (NQSKDGNIWL…QVNGGYRFSF (269 aa)) enclose the Autotransporter domain.

In terms of biological role, upon overexpression shows increased adherence to polyvinyl chloride (PVC) plates, increased mature biofilm formation. In Escherichia coli (strain K12), this protein is Probable autotransporter YcgV (ycgV).